Here is a 181-residue protein sequence, read N- to C-terminus: Der GTPase-activating protein YihI (181 aa).

2 disordered regions span residues 1–75 (MSRK…KKIP) and 145–181 (EPEA…DYKG). Residues 32–43 (RLRKKDKKRKGL) show a composition bias toward basic residues. Residues 146 to 155 (PEAEEEFEEE) are compositionally biased toward acidic residues. Residues 156-165 (APVRKSRSDD) are compositionally biased toward basic and acidic residues. Over residues 166 to 181 (DLLADFEDFDMDDYKG) the composition is skewed to acidic residues.

This sequence belongs to the YihI family. Interacts with Der.

Functionally, a GTPase-activating protein (GAP) that modifies Der/EngA GTPase function. May play a role in ribosome biogenesis. In Vibrio vulnificus (strain CMCP6), this protein is Der GTPase-activating protein YihI.